We begin with the raw amino-acid sequence, 285 residues long: Complex I assembly factor TIMMDC1, mitochondrial (285 aa).

4 helical membrane-spanning segments follow: residues 80–100 (AAVS…FIYA), 137–159 (RWSW…LTVY), 165–185 (MSHF…NLGV), and 188–208 (LVAG…LLMA). Positions 265–285 (RIEELLSLPRNPSSPHQQSKH) are disordered. Residues 274-285 (RNPSSPHQQSKH) are compositionally biased toward polar residues. At Ser-277 the chain carries Phosphoserine.

This sequence belongs to the Tim17/Tim22/Tim23 family. Associates with the intermediate 315 kDa subcomplex of incompletely assembled complex I. Interacts with TMEM70.

It is found in the mitochondrion membrane. Chaperone protein involved in the assembly of the mitochondrial NADH:ubiquinone oxidoreductase complex (complex I). Participates in constructing the membrane arm of complex I. The polypeptide is Complex I assembly factor TIMMDC1, mitochondrial (Mus musculus (Mouse)).